Reading from the N-terminus, the 527-residue chain is Bifunctional purine biosynthesis protein PurH (527 aa).

An MGS-like domain is found at 1 to 149; sequence MTADLLPVRR…KNFARVAVAT (149 aa).

The protein belongs to the PurH family.

It carries out the reaction (6R)-10-formyltetrahydrofolate + 5-amino-1-(5-phospho-beta-D-ribosyl)imidazole-4-carboxamide = 5-formamido-1-(5-phospho-D-ribosyl)imidazole-4-carboxamide + (6S)-5,6,7,8-tetrahydrofolate. The enzyme catalyses IMP + H2O = 5-formamido-1-(5-phospho-D-ribosyl)imidazole-4-carboxamide. It participates in purine metabolism; IMP biosynthesis via de novo pathway; 5-formamido-1-(5-phospho-D-ribosyl)imidazole-4-carboxamide from 5-amino-1-(5-phospho-D-ribosyl)imidazole-4-carboxamide (10-formyl THF route): step 1/1. The protein operates within purine metabolism; IMP biosynthesis via de novo pathway; IMP from 5-formamido-1-(5-phospho-D-ribosyl)imidazole-4-carboxamide: step 1/1. The polypeptide is Bifunctional purine biosynthesis protein PurH (Stenotrophomonas maltophilia (strain R551-3)).